The following is a 306-amino-acid chain: Triplex capsid protein 2 (306 aa).

This sequence belongs to the herpesviridae TRX2 protein family. In terms of assembly, interacts with TRX1 and major capisd protein/MCP.

Its subcellular location is the virion. It is found in the host nucleus. In terms of biological role, structural component of the T=16 icosahedral capsid. The capsid is composed of pentamers and hexamers of major capsid protein/MCP, which are linked together by heterotrimers called triplexes. These triplexes are formed by a single molecule of triplex protein 1/TRX1 and two copies of triplex protein 2/TRX2. Additionally, TRX1 is required for efficient transport of TRX2 to the nucleus, which is the site of capsid assembly. In Human cytomegalovirus (strain AD169) (HHV-5), this protein is Triplex capsid protein 2.